The chain runs to 383 residues: S-adenosylmethionine synthase (383 aa).

Histidine 15 is a binding site for ATP. Aspartate 17 contacts Mg(2+). Position 43 (glutamate 43) interacts with K(+). L-methionine contacts are provided by glutamate 56 and glutamine 99. The flexible loop stretch occupies residues 99-109; the sequence is QSPDINQGVDR. Residues 164–166, 230–231, aspartate 239, 245–246, alanine 262, and lysine 266 contribute to the ATP site; these read DAK, RF, and RK. Aspartate 239 serves as a coordination point for L-methionine. Lysine 270 lines the L-methionine pocket.

The protein belongs to the AdoMet synthase family. In terms of assembly, homotetramer; dimer of dimers. Mg(2+) is required as a cofactor. Requires K(+) as cofactor.

Its subcellular location is the cytoplasm. The catalysed reaction is L-methionine + ATP + H2O = S-adenosyl-L-methionine + phosphate + diphosphate. Its pathway is amino-acid biosynthesis; S-adenosyl-L-methionine biosynthesis; S-adenosyl-L-methionine from L-methionine: step 1/1. Its function is as follows. Catalyzes the formation of S-adenosylmethionine (AdoMet) from methionine and ATP. The overall synthetic reaction is composed of two sequential steps, AdoMet formation and the subsequent tripolyphosphate hydrolysis which occurs prior to release of AdoMet from the enzyme. The protein is S-adenosylmethionine synthase of Shewanella baltica (strain OS223).